We begin with the raw amino-acid sequence, 361 residues long: Ribosomal RNA large subunit methyltransferase M (361 aa).

S-adenosyl-L-methionine contacts are provided by residues Ser-193, 226 to 229, Asp-245, Asp-265, and Asp-283; that span reads CPGG. The active-site Proton acceptor is Lys-312.

The protein belongs to the class I-like SAM-binding methyltransferase superfamily. RNA methyltransferase RlmE family. RlmM subfamily. In terms of assembly, monomer.

The protein localises to the cytoplasm. The enzyme catalyses cytidine(2498) in 23S rRNA + S-adenosyl-L-methionine = 2'-O-methylcytidine(2498) in 23S rRNA + S-adenosyl-L-homocysteine + H(+). Functionally, catalyzes the 2'-O-methylation at nucleotide C2498 in 23S rRNA. The polypeptide is Ribosomal RNA large subunit methyltransferase M (Histophilus somni (strain 2336) (Haemophilus somnus)).